We begin with the raw amino-acid sequence, 381 residues long: E3 ubiquitin-protein ligase RNF13 (381 aa).

Positions 1–34 are cleaved as a signal peptide; it reads MLLSIGMLMLSATQIYTIVTVQLFAFLNLLPVEA. Residues 35 to 182 lie on the Lumenal side of the membrane; sequence DILAYNFENG…IPEFSLPLEY (148 aa). In terms of domain architecture, PA spans 64–160; it reads LKGFLINSKP…GEASANSLKE (97 aa). A glycan (N-linked (GlcNAc...) asparagine) is linked at N88. Residues 183–203 traverse the membrane as a helical segment; that stretch reads YLIPFLIIVGICLILIVIFMI. The Cytoplasmic portion of the chain corresponds to 204 to 381; it reads TKFVQDRHRA…ERDYRVTNTV (178 aa). The segment at 240 to 282 adopts an RING-type; atypical zinc-finger fold; the sequence is CAICLDEYEDGDKLRILPCSHAYHCKCVDPWLTKTKKTCPVCK. Positions 285–381 are disordered; sequence VVPSQGDSDS…ERDYRVTNTV (97 aa). Acidic residues-rich tracts occupy residues 292–305 and 339–353; these read SDSE…ENEV and SEYE…DSSD. The span at 370–381 shows a compositional bias: basic and acidic residues; it reads NDERDYRVTNTV.

As to expression, widely expressed (at protein level). Lowest levels in the liver, moderate levels in the heart, intestine and spleen, and high levels in skeletal muscle, kidney, proventriculus and brain. Also expressed in inner ear after noise exposure.

Its subcellular location is the endoplasmic reticulum membrane. The protein resides in the late endosome membrane. It localises to the lysosome membrane. It is found in the nucleus inner membrane. It carries out the reaction S-ubiquitinyl-[E2 ubiquitin-conjugating enzyme]-L-cysteine + [acceptor protein]-L-lysine = [E2 ubiquitin-conjugating enzyme]-L-cysteine + N(6)-ubiquitinyl-[acceptor protein]-L-lysine.. Its pathway is protein modification; protein ubiquitination. Its function is as follows. E3 ubiquitin-protein ligase that regulates cell proliferation. Involved in apoptosis regulation. Mediates ER stress-induced activation of JNK signaling pathway and apoptosis by promoting ERN1 activation and splicing of XBP1 mRNA. This Gallus gallus (Chicken) protein is E3 ubiquitin-protein ligase RNF13.